We begin with the raw amino-acid sequence, 196 residues long: Protein Flattop (196 aa).

Residues 107–196 (NGLRPEIFGK…PHAGRNLAEV (90 aa)) form a disordered region. Residues 113 to 124 (IFGKPHDPDSQK) show a composition bias toward basic and acidic residues. Positions 137-149 (APSPTIIPSSPAS) are enriched in low complexity. The span at 150-162 (NLSSPDQLQSSHP) shows a compositional bias: polar residues.

It belongs to the Flattop family. As to quaternary structure, microtubule inner protein component of sperm flagellar doublet microtubules. Interacts with DLG3. In terms of tissue distribution, expressed in trachea multiciliated cells.

The protein localises to the cytoplasm. The protein resides in the cytoskeleton. It localises to the cilium basal body. It is found in the cell projection. Its subcellular location is the cilium. The protein localises to the apical cell membrane. The protein resides in the cilium axoneme. It localises to the flagellum axoneme. Microtubule inner protein (MIP) part of the dynein-decorated doublet microtubules (DMTs) in cilia axoneme. Acts as a regulator of cilium basal body docking and positioning in mono- and multiciliated cells. Regulates basal body docking and cilia formation in multiciliated lung cells. Regulates kinocilium positioning and stereocilia bundle morphogenesis in the inner ear. This Bos taurus (Bovine) protein is Protein Flattop.